A 298-amino-acid chain; its full sequence is Protein Bel-1 (298 aa).

Residues 1 to 17 (MASWEKEKELAHLHQPE) show a composition bias toward basic and acidic residues. A disordered region spans residues 1 to 46 (MASWEKEKELAHLHQPEDDPLPDLSLLLDMDQFEPTEGPDSNPGAE). Residues 91 to 200 (SKWACARLIL…GEPLKPRVRA (110 aa)) mediate DNA binding. A Nuclear localization signal motif is present at residues 214–223 (ADRPKRSRWG). Residues 225–298 (APREQPNTSS…SGPPTGPSEN (74 aa)) form a transactivation domain region.

As to quaternary structure, homodimer or homomultimer. Forms complexes with the host nuclear factors NFIA, NFIB, NFIC or NFIX.

The protein localises to the host nucleus. Functionally, transcriptional transactivator that activates the viral internal promoter (IP), thereby enhancing its own expression. This transactivation is repressed by nuclear factor I. Also transactivates the long terminal repeat (LTR) promoter, thereby inducing structural gene expression, initiating the late phase of infection. It is therefore a key regulator of viral gene expression. It directly binds to and activates DNA target sites of viral promoters and those of distinct cellular genes. Required for viral replication. The sequence is that of Protein Bel-1 (bel1) from Chlorocebus aethiops (Green monkey).